The chain runs to 408 residues: Translation initiation factor 2 subunit gamma (408 aa).

The tr-type G domain occupies 4-201 (QSEINIGLVG…TIEERIKTPK (198 aa)). A G1 region spans residues 13–20 (GHVDHGKT). Mg(2+)-binding residues include aspartate 16, threonine 20, glycine 41, and serine 43. Residue 16–21 (DHGKTT) participates in GTP binding. The tract at residues 41-45 (GISIR) is G2. Residues cysteine 56, cysteine 59, cysteine 71, and cysteine 74 each contribute to the Zn(2+) site. Residues 88 to 91 (DAPG) form a G3 region. GTP is bound by residues 144–147 (NKID) and 179–181 (SAQ). The interval 144–147 (NKID) is G4. The G5 stretch occupies residues 179–181 (SAQ).

It belongs to the TRAFAC class translation factor GTPase superfamily. Classic translation factor GTPase family. EIF2G subfamily. In terms of assembly, heterotrimer composed of an alpha, a beta and a gamma chain. It depends on Mg(2+) as a cofactor.

The catalysed reaction is GTP + H2O = GDP + phosphate + H(+). Its function is as follows. eIF-2 functions in the early steps of protein synthesis by forming a ternary complex with GTP and initiator tRNA. The chain is Translation initiation factor 2 subunit gamma from Methanothermobacter thermautotrophicus (strain ATCC 29096 / DSM 1053 / JCM 10044 / NBRC 100330 / Delta H) (Methanobacterium thermoautotrophicum).